The sequence spans 72 residues: MSSKTASTNSIAQARRTVQQLRLEASIERIKVSKASADLMSYCEEHARSDPLLMGIPTSENPFKDKKTCIIL.

S2 carries the N-acetylserine modification. A phosphoserine mark is found at S10 and S26. Y42 is subject to Phosphotyrosine. Residue S49 is modified to Phosphoserine. Residue C69 is modified to Cysteine methyl ester. C69 carries the S-geranylgeranyl cysteine lipid modification. The propeptide at 70–72 is removed in mature form; it reads IIL.

The protein belongs to the G protein gamma family. As to quaternary structure, g proteins are composed of 3 units, alpha, beta and gamma.

The protein localises to the cell membrane. Functionally, guanine nucleotide-binding proteins (G proteins) are involved as a modulator or transducer in various transmembrane signaling systems. The beta and gamma chains are required for the GTPase activity, for replacement of GDP by GTP, and for G protein-effector interaction. The sequence is that of Guanine nucleotide-binding protein G(I)/G(S)/G(O) subunit gamma-12 (Gng12) from Mus musculus (Mouse).